A 219-amino-acid polypeptide reads, in one-letter code: RPA-interacting protein (219 aa).

The residue at position 18 (serine 18) is a Phosphoserine. Lysine 121 participates in a covalent cross-link: Glycyl lysine isopeptide (Lys-Gly) (interchain with G-Cter in SUMO); in isoform 2. The RIP-type zinc finger occupies 137 to 212 (CPVCTKYNLR…SSLLMSCLAC (76 aa)). Residues 164–180 (SSELTEQKLRACLEGSI) are mediates nuclear export.

Interacts with the RPA1 subunit of RPA complex. In terms of processing, sumoylated. Sumoylation is required for localization in the nuclear PML body and transport of RPA complex in PML body. Upon UV irradiation and during S phase, it is desumoylated, releasing RPA complex that is translocated to sites of DNA damage. Sumoylation takes place at different Lys residues. Variant 'Lys-103' adds a sumoylation site and increases total sumoylation levels. As to expression, widely expressed. Expressed in pancreas, kidney, muscle, liver, lung, placenta, brain, heart, leukocytes, colon, intestine, ovary, testis, prostate, thymus and spleen.

It localises to the cytoplasm. It is found in the nucleus. The protein localises to the PML body. Its function is as follows. Mediates the import of RPA complex into the nucleus, possibly via some interaction with importin beta. Isoform 2 is sumoylated and mediates the localization of RPA complex into the PML body of the nucleus, thereby participating in RPA function in DNA metabolism. The protein is RPA-interacting protein (RPAIN) of Homo sapiens (Human).